A 252-amino-acid chain; its full sequence is Hydroxyacylglutathione hydrolase (252 aa).

H54, H56, D58, H59, H111, D128, and H166 together coordinate Zn(2+).

Belongs to the metallo-beta-lactamase superfamily. Glyoxalase II family. As to quaternary structure, monomer. The cofactor is Zn(2+).

The enzyme catalyses an S-(2-hydroxyacyl)glutathione + H2O = a 2-hydroxy carboxylate + glutathione + H(+). It functions in the pathway secondary metabolite metabolism; methylglyoxal degradation; (R)-lactate from methylglyoxal: step 2/2. Its function is as follows. Thiolesterase that catalyzes the hydrolysis of S-D-lactoyl-glutathione to form glutathione and D-lactic acid. This chain is Hydroxyacylglutathione hydrolase, found in Aliivibrio fischeri (strain MJ11) (Vibrio fischeri).